Consider the following 619-residue polypeptide: Kinesin light chain 4 (619 aa).

Ser-2 is subject to N-acetylserine. A TPR 1 repeat occupies 55–88 (QQGGHEEGLVHEKARQLRRSMENIELGLSEAQVM). Residues 65–155 (HEKARQLRRS…HLEFLRQLRQ (91 aa)) adopt a coiled-coil conformation. The segment covering 156–175 (YDEDGHGMEEKEGEATKDSL) has biased composition (basic and acidic residues). The segment at 156 to 199 (YDEDGHGMEEKEGEATKDSLDDLFPNEEEEDSGNDLSRGQGAAA) is disordered. Ser-174 is modified (phosphoserine). The segment covering 179 to 188 (FPNEEEEDSG) has biased composition (acidic residues). TPR repeat units lie at residues 211–244 (LRTL…LERT), 253–286 (ATML…REST), 295–328 (AATL…REKV), 337–370 (AKQL…YESQ), and 379–412 (ARTK…AHVQ). A Phosphoserine modification is found at Ser-460. The stretch at 464–497 (NTTLKNLGALYRRQGKLEAAETLEECALRSRKQG) is one TPR 7 repeat. Ser-565, Ser-566, and Ser-590 each carry phosphoserine. Positions 571–619 (RKLQGTEPRPSSSSMKRAASLNYLNQPNAAPLQVSRGLSASTVDLSSSS) are disordered. The segment covering 609-619 (SASTVDLSSSS) has biased composition (low complexity). Thr-612 carries the phosphothreonine modification.

It belongs to the kinesin light chain family. In terms of assembly, oligomeric complex composed of two heavy chains and two light chains.

The protein localises to the cytoplasm. The protein resides in the cytoskeleton. Functionally, kinesin is a microtubule-associated force-producing protein that may play a role in organelle transport. The light chain may function in coupling of cargo to the heavy chain or in the modulation of its ATPase activity. The chain is Kinesin light chain 4 (Klc4) from Mus musculus (Mouse).